The chain runs to 538 residues: Chaperonin GroEL (538 aa).

ATP-binding positions include 29-32 (TLGP), 86-90 (DGTTT), Gly-413, 479-481 (DAL), and Asp-495.

The protein belongs to the chaperonin (HSP60) family. As to quaternary structure, forms a cylinder of 14 subunits composed of two heptameric rings stacked back-to-back. Interacts with the co-chaperonin GroES.

The protein localises to the cytoplasm. It carries out the reaction ATP + H2O + a folded polypeptide = ADP + phosphate + an unfolded polypeptide.. In terms of biological role, together with its co-chaperonin GroES, plays an essential role in assisting protein folding. The GroEL-GroES system forms a nano-cage that allows encapsulation of the non-native substrate proteins and provides a physical environment optimized to promote and accelerate protein folding. In Thermotoga neapolitana, this protein is Chaperonin GroEL.